The chain runs to 152 residues: Putative RING finger protein 157L (152 aa).

An RING-type zinc finger spans residues 111-146 (CVVCYENEICIKIQPCNHFVVCKSCFNRLNTCPMCR).

Belongs to the IIV-6 157L family.

This chain is Putative RING finger protein 157L, found in Invertebrate iridescent virus 6 (IIV-6).